Consider the following 779-residue polypeptide: Endonuclease MutS2 (779 aa).

Residue 328-335 (GPNTGGKT) participates in ATP binding. Residues 704-779 (LDLRGKRYEE…GSGATIVTLG (76 aa)) form the Smr domain.

It belongs to the DNA mismatch repair MutS family. MutS2 subfamily. Homodimer. Binds to stalled ribosomes, contacting rRNA.

Functionally, endonuclease that is involved in the suppression of homologous recombination and thus may have a key role in the control of bacterial genetic diversity. Its function is as follows. Acts as a ribosome collision sensor, splitting the ribosome into its 2 subunits. Detects stalled/collided 70S ribosomes which it binds and splits by an ATP-hydrolysis driven conformational change. Acts upstream of the ribosome quality control system (RQC), a ribosome-associated complex that mediates the extraction of incompletely synthesized nascent chains from stalled ribosomes and their subsequent degradation. Probably generates substrates for RQC. In Streptococcus agalactiae serotype Ia (strain ATCC 27591 / A909 / CDC SS700), this protein is Endonuclease MutS2.